The primary structure comprises 213 residues: MOB kinase activator-like 1 homolog A (213 aa).

The Zn(2+) site is built by cysteine 77, cysteine 82, histidine 159, and histidine 164.

Belongs to the MOB1/phocein family.

The sequence is that of MOB kinase activator-like 1 homolog A (mobA) from Dictyostelium discoideum (Social amoeba).